The chain runs to 104 residues: Translation initiation factor 1A (104 aa).

The span at 1 to 14 (MRGQQTPPQQPTRV) shows a compositional bias: low complexity. Residues 1 to 20 (MRGQQTPPQQPTRVRTPREN) form a disordered region. The region spanning 12–87 (TRVRTPRENE…EKCDVIWRYT (76 aa)) is the S1-like domain.

Belongs to the eIF-1A family.

Its function is as follows. Seems to be required for maximal rate of protein biosynthesis. Enhances ribosome dissociation into subunits and stabilizes the binding of the initiator Met-tRNA(I) to 40 S ribosomal subunits. The chain is Translation initiation factor 1A from Methanococcus maripaludis (strain DSM 14266 / JCM 13030 / NBRC 101832 / S2 / LL).